The chain runs to 805 residues: Leucine--tRNA ligase (805 aa).

The short motif at 40-51 is the 'HIGH' region element; the sequence is PYPSGQGLHVGH. The short motif at 576–580 is the 'KMSKS' region element; sequence KMSKS. Lys579 is a binding site for ATP.

It belongs to the class-I aminoacyl-tRNA synthetase family.

Its subcellular location is the cytoplasm. The catalysed reaction is tRNA(Leu) + L-leucine + ATP = L-leucyl-tRNA(Leu) + AMP + diphosphate. This is Leucine--tRNA ligase from Ligilactobacillus salivarius (strain UCC118) (Lactobacillus salivarius).